The sequence spans 174 residues: N5-carboxyaminoimidazole ribonucleotide mutase (174 aa).

Substrate-binding residues include S15, D18, and R45.

It belongs to the AIR carboxylase family. Class I subfamily.

The enzyme catalyses 5-carboxyamino-1-(5-phospho-D-ribosyl)imidazole + H(+) = 5-amino-1-(5-phospho-D-ribosyl)imidazole-4-carboxylate. It functions in the pathway purine metabolism; IMP biosynthesis via de novo pathway; 5-amino-1-(5-phospho-D-ribosyl)imidazole-4-carboxylate from 5-amino-1-(5-phospho-D-ribosyl)imidazole (N5-CAIR route): step 2/2. Its function is as follows. Catalyzes the conversion of N5-carboxyaminoimidazole ribonucleotide (N5-CAIR) to 4-carboxy-5-aminoimidazole ribonucleotide (CAIR). In Pyrococcus abyssi (strain GE5 / Orsay), this protein is N5-carboxyaminoimidazole ribonucleotide mutase.